The chain runs to 498 residues: Interferon regulatory factor 5 (498 aa).

Threonine 10 carries the post-translational modification Phosphothreonine. Positions 12 to 18 (PRRVRLK) match the Nuclear localization signal motif. The IRF tryptophan pentad repeat DNA-binding region spans 14–122 (RVRLKPWLVA…QPYKIYEVCS (109 aa)). The tract at residues 121–207 (CSNGPAPTDS…SPLAPPPGNP (87 aa)) is disordered. Positions 150 to 160 (LQRMLPSLSLT) match the Nuclear export signal motif. Serine 158 bears the Phosphoserine; by TBK1 mark. Pro residues predominate over residues 168–206 (TLQPPTLRPPTLQPPTLQPPVVLGPPAPDPSPLAPPPGN). At serine 293 the chain carries Phosphoserine; by TBK1. Serine 301 carries the post-translational modification Phosphoserine. Residues lysine 411 and lysine 412 each participate in a glycyl lysine isopeptide (Lys-Gly) (interchain with G-Cter in ubiquitin) cross-link. Serine 431, serine 435, serine 437, and serine 440 each carry phosphoserine. The residue at position 446 (serine 446) is a Phosphoserine; by IKKB. Residues 478–498 (PPGAGLGVGQGPWPMHPAGMQ) form a disordered region.

Belongs to the IRF family. Homodimer, when phosphorylated. Interacts with TASL (via pLxIS motif); interaction takes place downstream of TLR7, TLR8 or TLR9, leading to its activation. Interacts with MYD88 and TRAF6. In terms of processing, phosphorylation of serine and threonine residues by IKBKB in a C-terminal autoinhibitory region, stimulates dimerization, transport into the nucleus, assembly with the coactivator CBP/EP300 and initiation of transcription. 'Lys-63'-linked polyubiquitination by TRAF6 is required for activation.

Its subcellular location is the cytoplasm. It localises to the nucleus. Its activity is regulated as follows. Maintained as a monomer in an autoinhibited state. Phosphorylation and activation follow the following steps: innate adapter protein TASL recruits IRF5, thereby licensing IRF5 for phosphorylation by IKBKB. Phosphorylated IRF5 dissociates from the adapter proteins, dimerizes, and then enters the nucleus to induce IFNs. With respect to regulation, (Microbial infection) Activated upon coronavirus SARS-CoV-2 infection. Functionally, transcription factor that plays a critical role in innate immunity by activating expression of type I interferon (IFN) IFNA and INFB and inflammatory cytokines downstream of endolysosomal toll-like receptors TLR7, TLR8 and TLR9. Regulates the transcription of type I IFN genes (IFN-alpha and IFN-beta) and IFN-stimulated genes (ISG) by binding to an interferon-stimulated response element (ISRE) in their promoters. Can efficiently activate both the IFN-beta (IFNB) and the IFN-alpha (IFNA) genes and mediate their induction downstream of the TLR-activated, MyD88-dependent pathway. Key transcription factor regulating the IFN response during SARS-CoV-2 infection. The sequence is that of Interferon regulatory factor 5 from Homo sapiens (Human).